The following is a 377-amino-acid chain: Gibberellin 20 oxidase 1 (377 aa).

Residues 222-322 (ENDSIMRLNY…RKSLAFFLCP (101 aa)) form the Fe2OG dioxygenase domain. Positions 247, 249, and 303 each coordinate Fe cation. R313 is an active-site residue.

Belongs to the iron/ascorbate-dependent oxidoreductase family. GA20OX subfamily. Requires Fe(2+) as cofactor. It depends on L-ascorbate as a cofactor. Highly expressed in stems and inflorescence tissues. Detected in seeds, roots, leaves and siliques.

It carries out the reaction gibberellin A12 + 2 2-oxoglutarate + 3 O2 + H(+) = gibberellin A9 + 2 succinate + 3 CO2 + 2 H2O. The catalysed reaction is gibberellin A12 + 2-oxoglutarate + O2 = gibberellin A15 + succinate + CO2. It catalyses the reaction gibberellin A15 + 2-oxoglutarate + O2 = gibberellin A24 + succinate + CO2 + H2O. The enzyme catalyses gibberellin A53 + 2-oxoglutarate + O2 = gibberellin A44 + succinate + CO2. Its pathway is plant hormone biosynthesis; gibberellin biosynthesis. In terms of biological role, key oxidase enzyme in the biosynthesis of gibberellin that catalyzes the conversion of GA12 to GA9, via a three-step oxidation at C-20 of the GA skeleton. GA53 is less effectively oxidized than GA12 and is only oxidized one step to GA44. Involved in the promotion of the floral transition, fertility and silique elongation, but plays only a minor role in elongation of seedling organs. Acts redundantly with GA20OX2. This chain is Gibberellin 20 oxidase 1 (GA20OX1), found in Arabidopsis thaliana (Mouse-ear cress).